A 674-amino-acid polypeptide reads, in one-letter code: Translation factor GUF1, mitochondrial (674 aa).

A mitochondrion-targeting transit peptide spans 1–33; that stretch reads MLRPWFCFRSCVSLLSNRRQYGFRYLATAEPSK. The disordered stretch occupies residues 32 to 51; sequence SKSEKPAKPVKPAKPMSVQE. The tr-type G domain maps to 75–257; sequence QNYRNFSIVA…SIIKNIPAPV (183 aa). GTP-binding positions include 84–91, 150–154, and 204–207; these read AHVDHGKS, DTPGH, and NKID.

The protein belongs to the TRAFAC class translation factor GTPase superfamily. Classic translation factor GTPase family. LepA subfamily.

It is found in the mitochondrion inner membrane. The catalysed reaction is GTP + H2O = GDP + phosphate + H(+). In terms of biological role, promotes mitochondrial protein synthesis. May act as a fidelity factor of the translation reaction, by catalyzing a one-codon backward translocation of tRNAs on improperly translocated ribosomes. Binds to mitochondrial ribosomes in a GTP-dependent manner. This Lodderomyces elongisporus (strain ATCC 11503 / CBS 2605 / JCM 1781 / NBRC 1676 / NRRL YB-4239) (Yeast) protein is Translation factor GUF1, mitochondrial.